The primary structure comprises 373 residues: MLIWLAELSDHIHFFSTHFRFLNLFRYITFRTGGALFTSALIVFLFGPRIISSLRVRQGRGQPIRADGPQTHFKKAGTPTMGGLMILAGIVVSSLLWADLANVYVVATLLVTLGFGAIGFYDDYLKVTKQSDKGFSGRARLGLEFIIAAIAVYFMMNTALSSGPAGSTFGSSIAFPFFKSFMLNLGMFFVLFGAFVIVSAGNAVNLTDGLDGLAIVPVMIAAASFGVIAYLAGNFVFADYLAINFVPGTGELAVVLGAVIGAGLGFLWFNAPPAAIFMGDTGSLALGGLIGTVAVATKHEIVMAIIGGLFVLEALSVIIQVGFFKMTRRRVFLMAPIHHHFEKKGWTESQVVVRFWIVAVILAMIGLSTLKLR.

Transmembrane regions (helical) follow at residues 34-54 (GALFTSALIVFLFGPRIISSL), 78-98 (TPTMGGLMILAGIVVSSLLWA), 100-120 (LANVYVVATLLVTLGFGAIGF), 141-161 (LGLEFIIAAIAVYFMMNTALS), 181-201 (FMLNLGMFFVLFGAFVIVSAG), 212-232 (GLAIVPVMIAAASFGVIAYLA), 252-272 (LAVVLGAVIGAGLGFLWFNAP), 275-295 (AIFMGDTGSLALGGLIGTVAV), 301-321 (IVMAIIGGLFVLEALSVIIQV), and 350-370 (QVVVRFWIVAVILAMIGLSTL).

This sequence belongs to the glycosyltransferase 4 family. MraY subfamily. The cofactor is Mg(2+).

Its subcellular location is the cell inner membrane. The catalysed reaction is UDP-N-acetyl-alpha-D-muramoyl-L-alanyl-gamma-D-glutamyl-meso-2,6-diaminopimeloyl-D-alanyl-D-alanine + di-trans,octa-cis-undecaprenyl phosphate = di-trans,octa-cis-undecaprenyl diphospho-N-acetyl-alpha-D-muramoyl-L-alanyl-D-glutamyl-meso-2,6-diaminopimeloyl-D-alanyl-D-alanine + UMP. It functions in the pathway cell wall biogenesis; peptidoglycan biosynthesis. Catalyzes the initial step of the lipid cycle reactions in the biosynthesis of the cell wall peptidoglycan: transfers peptidoglycan precursor phospho-MurNAc-pentapeptide from UDP-MurNAc-pentapeptide onto the lipid carrier undecaprenyl phosphate, yielding undecaprenyl-pyrophosphoryl-MurNAc-pentapeptide, known as lipid I. This chain is Phospho-N-acetylmuramoyl-pentapeptide-transferase, found in Rhizobium rhizogenes (strain K84 / ATCC BAA-868) (Agrobacterium radiobacter).